A 59-amino-acid polypeptide reads, in one-letter code: Antitoxin RelB4 (59 aa).

The disordered stretch occupies residues 38 to 59 (VGEWLKTLGTPHQTPPPYSWRK). Pro residues predominate over residues 50 to 59 (QTPPPYSWRK).

In terms of biological role, antitoxin component of a type II toxin-antitoxin (TA) system. Neutralizes the effect of cognate toxin RelE4, but no other RelE or ParE toxin. The polypeptide is Antitoxin RelB4 (relB4) (Caulobacter vibrioides (strain ATCC 19089 / CIP 103742 / CB 15) (Caulobacter crescentus)).